Here is a 199-residue protein sequence, read N- to C-terminus: Pre T-cell antigen receptor alpha (199 aa).

The signal sequence occupies residues 1–16 (MARTWLLLFLGLRCQA). The Extracellular segment spans residues 17–155 (LPSGIAGTPF…RQVLRLSVLR (139 aa)). Residues cysteine 47 and cysteine 107 are joined by a disulfide bond. 2 N-linked (GlcNAc...) asparagine glycosylation sites follow: asparagine 67 and asparagine 117. Positions 117–139 (NRSTHPLQLSGEEASTDRTCPQE) are disordered. Residues 156–176 (LLLFKLLLLDVFLTCSRLCVL) traverse the membrane as a helical segment. Topologically, residues 177 to 199 (AGQHLLPPPSSKQAPASTHQSWT) are cytoplasmic.

Heterodimer with TCRB; disulfide linked. This heterodimer assembles with CD3 proteins into a signaling-competent pre-T-cell receptor complex. Interacts with RHBDD1. As to expression, found in CD45+ but not in the CD45- fetal liver cells.

It is found in the membrane. The protein localises to the cell membrane. Functionally, component of the pre-T-cell receptor complex (composed of PTCRA, TCRB and the CD3 complex) that has a crucial role in early T-cell development, particularly alpha-beta T cell differentiation. This chain is Pre T-cell antigen receptor alpha, found in Rattus norvegicus (Rat).